The following is a 507-amino-acid chain: Probable bifunctional methylthioribulose-1-phosphate dehydratase/enolase-phosphatase E1 (507 aa).

An N-acetylalanine modification is found at alanine 2. Residues 2-237 (AVAAAAMIGL…AIKLHQLGLD (236 aa)) are methylthioribulose-1-phosphate dehydratase. Cysteine 109 is a substrate binding site. Zn(2+) contacts are provided by histidine 127 and histidine 129. The active-site Proton donor/acceptor is the glutamate 152. Histidine 202 is a Zn(2+) binding site. Residues 268–507 (IVLDIEGTTT…FKTVTSFSQI (240 aa)) form an enolase-phosphatase E1 region. Mg(2+) is bound by residues aspartate 271 and glutamate 273. Residues 406–407 (SS) and lysine 440 contribute to the substrate site. Aspartate 466 serves as a coordination point for Mg(2+).

In the N-terminal section; belongs to the aldolase class II family. MtnB subfamily. It in the C-terminal section; belongs to the HAD-like hydrolase superfamily. MasA/MtnC family. Zn(2+) is required as a cofactor. Requires Mg(2+) as cofactor.

It catalyses the reaction 5-(methylsulfanyl)-D-ribulose 1-phosphate = 5-methylsulfanyl-2,3-dioxopentyl phosphate + H2O. The enzyme catalyses 5-methylsulfanyl-2,3-dioxopentyl phosphate + H2O = 1,2-dihydroxy-5-(methylsulfanyl)pent-1-en-3-one + phosphate. The protein operates within amino-acid biosynthesis; L-methionine biosynthesis via salvage pathway; L-methionine from S-methyl-5-thio-alpha-D-ribose 1-phosphate: step 2/6. It functions in the pathway amino-acid biosynthesis; L-methionine biosynthesis via salvage pathway; L-methionine from S-methyl-5-thio-alpha-D-ribose 1-phosphate: step 3/6. It participates in amino-acid biosynthesis; L-methionine biosynthesis via salvage pathway; L-methionine from S-methyl-5-thio-alpha-D-ribose 1-phosphate: step 4/6. The chain is Probable bifunctional methylthioribulose-1-phosphate dehydratase/enolase-phosphatase E1 from Arabidopsis thaliana (Mouse-ear cress).